A 305-amino-acid polypeptide reads, in one-letter code: Protoheme IX farnesyltransferase (305 aa).

9 consecutive transmembrane segments (helical) span residues valine 31 to histidine 51, proline 52 to isoleucine 72, valine 96 to alanine 118, leucine 123 to lysine 145, asparagine 151 to serine 171, isoleucine 179 to phenylalanine 199, isoleucine 225 to asparagine 245, phenylalanine 247 to leucine 267, and phenylalanine 281 to isoleucine 301.

This sequence belongs to the UbiA prenyltransferase family. Protoheme IX farnesyltransferase subfamily.

The protein localises to the cell membrane. The catalysed reaction is heme b + (2E,6E)-farnesyl diphosphate + H2O = Fe(II)-heme o + diphosphate. The protein operates within porphyrin-containing compound metabolism; heme O biosynthesis; heme O from protoheme: step 1/1. Converts heme B (protoheme IX) to heme O by substitution of the vinyl group on carbon 2 of heme B porphyrin ring with a hydroxyethyl farnesyl side group. In Rickettsia africae (strain ESF-5), this protein is Protoheme IX farnesyltransferase.